Here is a 145-residue protein sequence, read N- to C-terminus: U1 small nuclear ribonucleoprotein C (145 aa).

Residues 4 to 36 (YYCDYCDTYLTHDSPSVRKTHCTGRKHRDNVKF) form a Matrin-type zinc finger. The disordered stretch occupies residues 67–91 (FAGGPGGAPPKPAGVSIPPPNMGAP). The span at 73–91 (GAPPKPAGVSIPPPNMGAP) shows a compositional bias: pro residues.

It belongs to the U1 small nuclear ribonucleoprotein C family. In terms of assembly, U1 snRNP is composed of the 7 core Sm proteins B/B', D1, D2, D3, E, F and G that assemble in a heptameric protein ring on the Sm site of the small nuclear RNA to form the core snRNP, and at least 3 U1 snRNP-specific proteins U1-70K, U1-A and U1-C. U1-C interacts with U1 snRNA and the 5' splice-site region of the pre-mRNA.

It localises to the nucleus. Component of the spliceosomal U1 snRNP, which is essential for recognition of the pre-mRNA 5' splice-site and the subsequent assembly of the spliceosome. U1-C is directly involved in initial 5' splice-site recognition for both constitutive and regulated alternative splicing. The interaction with the 5' splice-site seems to precede base-pairing between the pre-mRNA and the U1 snRNA. Stimulates commitment or early (E) complex formation by stabilizing the base pairing of the 5' end of the U1 snRNA and the 5' splice-site region. Regulates alternative splicing of a distinct group of target genes. In Drosophila melanogaster (Fruit fly), this protein is U1 small nuclear ribonucleoprotein C.